We begin with the raw amino-acid sequence, 238 residues long: MGRAFEYRRAAKEKRWDKMSKVFPKLAKAITVAAKEGGGDPAMNAKLRTAIANAKAQNMPKDNIDAAIKRASGKDGIFSEITYEGKAAYGVLIFIECTTDNPTRTIANIKSYFNKTPNASILTNGSIEFMFARKSAFEFRTDKNIEELELALIDYGLEELESRESEEGIYHIAYGDYKDFGRLSEGFEHLNIPISKAALQRIPTSPISLSETQMQDIEKLLDKIEDDDDVQAVYTNIE.

This sequence belongs to the TACO1 family.

It localises to the cytoplasm. The chain is Probable transcriptional regulatory protein HH_1604 from Helicobacter hepaticus (strain ATCC 51449 / 3B1).